The chain runs to 64 residues: Large ribosomal subunit protein bL35 (64 aa).

The segment at 1–43 is disordered; that stretch reads MPKMKSKKSLAKRVIAKKNGTLKRGKAYRSHRATGKTTKQKRH.

Belongs to the bacterial ribosomal protein bL35 family.

The sequence is that of Large ribosomal subunit protein bL35 from Mesoplasma florum (strain ATCC 33453 / NBRC 100688 / NCTC 11704 / L1) (Acholeplasma florum).